The following is a 59-amino-acid chain: Large ribosomal subunit protein bL32 (59 aa).

Residues 1-59 are disordered; it reads MAVQQNRKTPSKRGMRRSHDALSGPALSVEPQTGETHRRHHVSPDGYYRGRKVMQGRED. A compositionally biased stretch (basic residues) spans 49–59; sequence RGRKVMQGRED.

It belongs to the bacterial ribosomal protein bL32 family.

In Alkalilimnicola ehrlichii (strain ATCC BAA-1101 / DSM 17681 / MLHE-1), this protein is Large ribosomal subunit protein bL32.